We begin with the raw amino-acid sequence, 233 residues long: Large ribosomal subunit protein uL1 (233 aa).

Belongs to the universal ribosomal protein uL1 family. In terms of assembly, part of the 50S ribosomal subunit.

Its function is as follows. Binds directly to 23S rRNA. The L1 stalk is quite mobile in the ribosome, and is involved in E site tRNA release. In terms of biological role, protein L1 is also a translational repressor protein, it controls the translation of the L11 operon by binding to its mRNA. The protein is Large ribosomal subunit protein uL1 of Vibrio cholerae serotype O1 (strain ATCC 39315 / El Tor Inaba N16961).